Reading from the N-terminus, the 429-residue chain is Nicotinate phosphoribosyltransferase (429 aa).

Nicotinate contacts are provided by Tyr-15, Phe-177, and Thr-229. A Phosphohistidine; by autocatalysis modification is found at His-232. Arg-294 is a nicotinate binding site. A 5-phospho-alpha-D-ribose 1-diphosphate-binding site is contributed by Thr-355.

It belongs to the NAPRTase family. Transiently phosphorylated on a His residue during the reaction cycle. Phosphorylation strongly increases the affinity for substrates and increases the rate of nicotinate D-ribonucleotide production. Dephosphorylation regenerates the low-affinity form of the enzyme, leading to product release.

The protein localises to the cytoplasm. Its subcellular location is the nucleus. The enzyme catalyses nicotinate + 5-phospho-alpha-D-ribose 1-diphosphate + ATP + H2O = nicotinate beta-D-ribonucleotide + ADP + phosphate + diphosphate. Its pathway is cofactor biosynthesis; NAD(+) biosynthesis; nicotinate D-ribonucleotide from nicotinate: step 1/1. Catalyzes the first step in the biosynthesis of NAD from nicotinic acid, the ATP-dependent synthesis of beta-nicotinate D-ribonucleotide from nicotinate and 5-phospho-D-ribose 1-phosphate. Essential for growth under anaerobic conditions. This Saccharomyces cerevisiae (strain ATCC 204508 / S288c) (Baker's yeast) protein is Nicotinate phosphoribosyltransferase (NPT1).